We begin with the raw amino-acid sequence, 446 residues long: 6-methylsalicylate 1-monooxygenase atA (446 aa).

Residues 7–27 (VSVAIIGGGIGGLSLAIGLLQ) form a helical membrane-spanning segment. Positions 37 and 50 each coordinate FAD. An N-linked (GlcNAc...) asparagine glycan is attached at N107. R116 serves as a coordination point for FAD. R200 is a catalytic residue. FAD is bound by residues D311 and A324.

Belongs to the paxM FAD-dependent monooxygenase family. FAD serves as cofactor.

The protein resides in the membrane. It catalyses the reaction 6-methylsalicylate + AH2 + O2 + H(+) = 3-methylcatechol + A + CO2 + H2O. Its pathway is secondary metabolite biosynthesis. Its function is as follows. 6-methylsalicylate 1-monooxygenase; part of the gene cluster that mediates the biosynthesis of terreic acid, a quinone epoxide inhibitor of Bruton's tyrosine kinase. The first step of the pathway is the synthesis of 6-methylsalicylic acid (6-MSA) by the 6-methylsalicylic acid synthase atX. In the biosynthesis of 6-MSA, atX utilizes one acetyl-CoA and three malonyl-CoAs as its substrates and catalyzes a series of programmed reactions including Claisen condensation, reduction, aldol cyclization, and the hydrolytic cleavage that yields 6-MSA. The 6-methylsalicylate 1-monooxygenase atA then catalyzes the decarboxylative hydroxylation of 6-MSA to 3-methylcatechol. The next step is the conversion of 3-methylcatechol to 3-methyl-1,2,4-benzenetriol by cytochrome P450 monooxygenase atE, which is enhanced by cytochrome P450 monooxygenase atG. Then, the epoxidase atD catalyzes the epoxidation and hydroxyl oxidation of 3-methyl-1,2,4-benzenetriol to terremutin. Lastly, GMC oxidoreductase atC oxidizes terremutin to terreic acid. This Aspergillus terreus (strain NIH 2624 / FGSC A1156) protein is 6-methylsalicylate 1-monooxygenase atA.